Consider the following 130-residue polypeptide: Small ribosomal subunit protein uS9 (130 aa).

The protein belongs to the universal ribosomal protein uS9 family.

This is Small ribosomal subunit protein uS9 from Histophilus somni (strain 129Pt) (Haemophilus somnus).